The chain runs to 282 residues: Aspergillopepsin-2 (282 aa).

Residues methionine 1–alanine 18 form the signal peptide. 2 propeptides span residues alanine 19–asparagine 59 and glycine 99–arginine 109. The span at alanine 27 to serine 39 shows a compositional bias: basic residues. Positions alanine 27–glycine 46 are disordered. Glutamine 110 carries the post-translational modification Pyrrolidone carboxylic acid. Intrachain disulfides connect cysteine 115/cysteine 139 and cysteine 127/cysteine 210.

The protein belongs to the peptidase G1 family. As to quaternary structure, heterodimer of two noncovalently bound light and heavy chains.

It carries out the reaction Preferential cleavage in B chain of insulin: 3-Asn-|-Gln-4, 13-Gly-|-Ala-14, and 26-Tyr-|-Thr-27.. This is Aspergillopepsin-2 from Aspergillus niger.